A 231-amino-acid chain; its full sequence is Phosphatidylserine decarboxylase proenzyme (231 aa).

Catalysis depends on S188, which acts as the Schiff-base intermediate with substrate; via pyruvic acid. S188 is modified (pyruvic acid (Ser); by autocatalysis).

The protein belongs to the phosphatidylserine decarboxylase family. PSD-A subfamily. As to quaternary structure, heterodimer of a large membrane-associated beta subunit and a small pyruvoyl-containing alpha subunit. Pyruvate is required as a cofactor. Post-translationally, is synthesized initially as an inactive proenzyme. Formation of the active enzyme involves a self-maturation process in which the active site pyruvoyl group is generated from an internal serine residue via an autocatalytic post-translational modification. Two non-identical subunits are generated from the proenzyme in this reaction, and the pyruvate is formed at the N-terminus of the alpha chain, which is derived from the carboxyl end of the proenzyme. The post-translation cleavage follows an unusual pathway, termed non-hydrolytic serinolysis, in which the side chain hydroxyl group of the serine supplies its oxygen atom to form the C-terminus of the beta chain, while the remainder of the serine residue undergoes an oxidative deamination to produce ammonia and the pyruvoyl prosthetic group on the alpha chain.

The protein localises to the cell membrane. The catalysed reaction is a 1,2-diacyl-sn-glycero-3-phospho-L-serine + H(+) = a 1,2-diacyl-sn-glycero-3-phosphoethanolamine + CO2. The protein operates within phospholipid metabolism; phosphatidylethanolamine biosynthesis; phosphatidylethanolamine from CDP-diacylglycerol: step 2/2. In terms of biological role, catalyzes the formation of phosphatidylethanolamine (PtdEtn) from phosphatidylserine (PtdSer). The protein is Phosphatidylserine decarboxylase proenzyme of Rickettsia bellii (strain OSU 85-389).